The primary structure comprises 127 residues: Peroxiredoxin-2 (127 aa).

In terms of domain architecture, Thioredoxin spans 1–125 (LFFYPLDFTF…ALRLVQGXQY (125 aa)). Cys12 serves as the catalytic Cysteine sulfenic acid (-SOH) intermediate. Ser73 is modified (phosphoserine).

Belongs to the peroxiredoxin family. AhpC/Prx1 subfamily. Homodimer; disulfide-linked, upon oxidation. 5 homodimers assemble to form a ring-like decamer. Interacts with TIPIN. Post-translationally, the enzyme can be inactivated by further oxidation of the cysteine sulfenic acid (C(P)-SOH) to sulphinic acid (C(P)-SO2H) instead of its condensation to a disulfide bond. It can be reactivated by forming a transient disulfide bond with sulfiredoxin SRXN1, which reduces the cysteine sulfinic acid in an ATP- and Mg-dependent manner. In terms of processing, acetylation increases resistance to transition to high molecular-mass complexes. Deacetylated by HDAC6 which decreases reducing activity.

Its subcellular location is the cytoplasm. The catalysed reaction is a hydroperoxide + [thioredoxin]-dithiol = an alcohol + [thioredoxin]-disulfide + H2O. Thiol-specific peroxidase that catalyzes the reduction of hydrogen peroxide and organic hydroperoxides to water and alcohols, respectively. Plays a role in cell protection against oxidative stress by detoxifying peroxides and as sensor of hydrogen peroxide-mediated signaling events. Might participate in the signaling cascades of growth factors and tumor necrosis factor-alpha by regulating the intracellular concentrations of H(2)O(2). The chain is Peroxiredoxin-2 (PRDX2) from Sus scrofa (Pig).